A 418-amino-acid polypeptide reads, in one-letter code: Queuine tRNA-ribosyltransferase accessory subunit 2 (418 aa).

Cys-325, Cys-327, Cys-330, and His-356 together coordinate Zn(2+).

It belongs to the queuine tRNA-ribosyltransferase family. QTRT2 subfamily. In terms of assembly, heterodimer of a catalytic subunit and an accessory subunit. It depends on Zn(2+) as a cofactor.

The protein resides in the cytoplasm. Its function is as follows. Non-catalytic subunit of the queuine tRNA-ribosyltransferase (TGT) that catalyzes the base-exchange of a guanine (G) residue with queuine (Q) at position 34 (anticodon wobble position) in tRNAs with GU(N) anticodons (tRNA-Asp, -Asn, -His and -Tyr), resulting in the hypermodified nucleoside queuosine (7-(((4,5-cis-dihydroxy-2-cyclopenten-1-yl)amino)methyl)-7-deazaguanosine). The sequence is that of Queuine tRNA-ribosyltransferase accessory subunit 2 from Drosophila sechellia (Fruit fly).